We begin with the raw amino-acid sequence, 78 residues long: Large ribosomal subunit protein bL28 (78 aa).

Positions 1-21 are disordered; the sequence is MSRVCQLSGKRANNGMAVSHS.

It belongs to the bacterial ribosomal protein bL28 family.

This chain is Large ribosomal subunit protein bL28, found in Synechococcus sp. (strain RCC307).